A 198-amino-acid polypeptide reads, in one-letter code: Protein LKAAEAR1 (198 aa).

A disordered region spans residues 1–47; sequence MPTLGVKGARERDKNSASGAGAGAGAGAGAGEKHRKGPRTTDPPKTG. Gly residues predominate over residues 20-30; that stretch reads AGAGAGAGAGA.

This Mus musculus (Mouse) protein is Protein LKAAEAR1 (Lkaaear1).